The following is a 292-amino-acid chain: Brix domain-containing protein ZK795.3 (292 aa).

A Brix domain is found at 78–259 (PKIVITTSRD…PYQIKLGTLE (182 aa)).

In Caenorhabditis elegans, this protein is Brix domain-containing protein ZK795.3.